Here is a 322-residue protein sequence, read N- to C-terminus: Aspartate carbamoyltransferase catalytic subunit (322 aa).

Residues Arg70 and Thr71 each contribute to the carbamoyl phosphate site. Lys98 is a binding site for L-aspartate. Residues Arg120, His150, and Gln153 each coordinate carbamoyl phosphate. The L-aspartate site is built by Arg184 and Arg239. Gly280 and Pro281 together coordinate carbamoyl phosphate.

This sequence belongs to the aspartate/ornithine carbamoyltransferase superfamily. ATCase family. Heterododecamer (2C3:3R2) of six catalytic PyrB chains organized as two trimers (C3), and six regulatory PyrI chains organized as three dimers (R2).

The enzyme catalyses carbamoyl phosphate + L-aspartate = N-carbamoyl-L-aspartate + phosphate + H(+). Its pathway is pyrimidine metabolism; UMP biosynthesis via de novo pathway; (S)-dihydroorotate from bicarbonate: step 2/3. Its function is as follows. Catalyzes the condensation of carbamoyl phosphate and aspartate to form carbamoyl aspartate and inorganic phosphate, the committed step in the de novo pyrimidine nucleotide biosynthesis pathway. The chain is Aspartate carbamoyltransferase catalytic subunit from Xylella fastidiosa (strain 9a5c).